The following is a 727-amino-acid chain: LIM domain-binding protein 3 (727 aa).

The region spanning 1–84 is the PDZ domain; the sequence is MSYSVTLTGP…NLSLTLQKSK (84 aa). Phosphoserine is present on residues serine 44, serine 121, and serine 123. Residues 86–197 are disordered; sequence PIPISTTAPP…GSSQPRQYNN (112 aa). Residues 140–156 show a composition bias toward low complexity; that stretch reads PTFSPAFSRPSAFSSLA. Residues 188–197 are compositionally biased toward polar residues; sequence GSSQPRQYNN. Serine 217 is subject to Phosphoserine. Arginine 219 carries the post-translational modification Omega-N-methylarginine. Residue serine 223 is modified to Phosphoserine. Disordered regions lie at residues 284–440 and 472–529; these read TEFM…YTPS and APSV…PQVP. Residues 312–385 are compositionally biased toward low complexity; it reads ATTPLLPASA…SAPATHTSYS (74 aa). Pro residues predominate over residues 428-440; that stretch reads PYTPSPAPAYTPS. The segment covering 494-513 has biased composition (polar residues); the sequence is DSFSQKFAPGKSTTSISKQT. Omega-N-methylarginine is present on residues arginine 516 and arginine 533. LIM zinc-binding domains follow at residues 549 to 607, 608 to 667, and 668 to 727; these read PLCG…QFFA, PLCA…LFST, and KCHG…TINL.

In terms of assembly, interacts via its LIM domains with various PKC isoforms. Interacts via its PDZ domain with the ACTN2 C-terminal region. Interacts with MYOZ1, MYOZ2 and MYOZ3. As to expression, expressed primarily in skeletal muscle and to a lesser extent in heart. Also detected in brain and placenta.

The protein localises to the cytoplasm. It localises to the perinuclear region. Its subcellular location is the cell projection. It is found in the pseudopodium. The protein resides in the cytoskeleton. The protein localises to the myofibril. It localises to the sarcomere. Its subcellular location is the z line. Its function is as follows. May function as an adapter in striated muscle to couple protein kinase C-mediated signaling via its LIM domains to the cytoskeleton. The protein is LIM domain-binding protein 3 of Homo sapiens (Human).